The primary structure comprises 1551 residues: Pentafunctional AROM polypeptide 2 (1551 aa).

Residues 1–379 (MSIEKVSILG…YESKAHQIFK (379 aa)) form a 3-dehydroquinate synthase region. Residues 42–44 (DTN), 80–83 (ENHK), 111–113 (GGV), and aspartate 116 contribute to the NAD(+) site. Residue arginine 127 participates in 7-phospho-2-dehydro-3-deoxy-D-arabino-heptonate binding. Position 136–137 (136–137 (TT)) interacts with NAD(+). Positions 143 and 149 each coordinate 7-phospho-2-dehydro-3-deoxy-D-arabino-heptonate. Lysine 158 provides a ligand contact to NAD(+). Residue asparagine 159 participates in 7-phospho-2-dehydro-3-deoxy-D-arabino-heptonate binding. Residues 176 to 179 (FLQT) and asparagine 187 each bind NAD(+). Residue glutamate 191 coordinates Zn(2+). Residues 191–194 (EVVK) and lysine 243 contribute to the 7-phospho-2-dehydro-3-deoxy-D-arabino-heptonate site. The active-site Proton acceptor; for 3-dehydroquinate synthase activity is the glutamate 253. 7-phospho-2-dehydro-3-deoxy-D-arabino-heptonate contacts are provided by residues 257-261 (RNLLN) and histidine 264. Histidine 264 is a binding site for Zn(2+). Histidine 268 (proton acceptor; for 3-dehydroquinate synthase activity) is an active-site residue. 2 residues coordinate 7-phospho-2-dehydro-3-deoxy-D-arabino-heptonate: histidine 280 and lysine 351. Histidine 280 is a binding site for Zn(2+). The tract at residues 392–835 (VHPFANRHPE…WDVLHSKFNA (444 aa)) is EPSP synthase. Residues 854–1044 (DRSIVIIGMR…LPATRSTFVT (191 aa)) are shikimate kinase. 861-868 (GMRAAGKT) contributes to the ATP binding site. Residues 1045 to 1258 (LTYPDLRKVP…IGVGQLSLKE (214 aa)) are 3-dehydroquinase. The Proton acceptor; for 3-dehydroquinate dehydratase activity role is filled by histidine 1162. Residue lysine 1191 is the Schiff-base intermediate with substrate; for 3-dehydroquinate dehydratase activity of the active site. The segment at 1271–1551 (EKEFWVVGFP…KVIHSAVLNE (281 aa)) is shikimate dehydrogenase.

The protein in the N-terminal section; belongs to the sugar phosphate cyclases superfamily. Dehydroquinate synthase family. This sequence in the 2nd section; belongs to the EPSP synthase family. In the 3rd section; belongs to the shikimate kinase family. It in the 4th section; belongs to the type-I 3-dehydroquinase family. The protein in the C-terminal section; belongs to the shikimate dehydrogenase family. Homodimer. Zn(2+) is required as a cofactor.

It localises to the cytoplasm. The catalysed reaction is 7-phospho-2-dehydro-3-deoxy-D-arabino-heptonate = 3-dehydroquinate + phosphate. It catalyses the reaction 3-dehydroquinate = 3-dehydroshikimate + H2O. The enzyme catalyses shikimate + NADP(+) = 3-dehydroshikimate + NADPH + H(+). It carries out the reaction shikimate + ATP = 3-phosphoshikimate + ADP + H(+). The catalysed reaction is 3-phosphoshikimate + phosphoenolpyruvate = 5-O-(1-carboxyvinyl)-3-phosphoshikimate + phosphate. Its pathway is metabolic intermediate biosynthesis; chorismate biosynthesis; chorismate from D-erythrose 4-phosphate and phosphoenolpyruvate: step 2/7. The protein operates within metabolic intermediate biosynthesis; chorismate biosynthesis; chorismate from D-erythrose 4-phosphate and phosphoenolpyruvate: step 3/7. It functions in the pathway metabolic intermediate biosynthesis; chorismate biosynthesis; chorismate from D-erythrose 4-phosphate and phosphoenolpyruvate: step 4/7. It participates in metabolic intermediate biosynthesis; chorismate biosynthesis; chorismate from D-erythrose 4-phosphate and phosphoenolpyruvate: step 5/7. Its pathway is metabolic intermediate biosynthesis; chorismate biosynthesis; chorismate from D-erythrose 4-phosphate and phosphoenolpyruvate: step 6/7. Functionally, the AROM polypeptide catalyzes 5 consecutive enzymatic reactions in prechorismate polyaromatic amino acid biosynthesis. This chain is Pentafunctional AROM polypeptide 2, found in Lodderomyces elongisporus (strain ATCC 11503 / CBS 2605 / JCM 1781 / NBRC 1676 / NRRL YB-4239) (Yeast).